The primary structure comprises 190 residues: Peptidyl-tRNA hydrolase (190 aa).

Tyr-14 contributes to the tRNA binding site. His-19 acts as the Proton acceptor in catalysis. 3 residues coordinate tRNA: Tyr-63, Asn-65, and Asn-112.

It belongs to the PTH family. As to quaternary structure, monomer.

It localises to the cytoplasm. The catalysed reaction is an N-acyl-L-alpha-aminoacyl-tRNA + H2O = an N-acyl-L-amino acid + a tRNA + H(+). Its function is as follows. Hydrolyzes ribosome-free peptidyl-tRNAs (with 1 or more amino acids incorporated), which drop off the ribosome during protein synthesis, or as a result of ribosome stalling. Functionally, catalyzes the release of premature peptidyl moieties from peptidyl-tRNA molecules trapped in stalled 50S ribosomal subunits, and thus maintains levels of free tRNAs and 50S ribosomes. This is Peptidyl-tRNA hydrolase from Kosmotoga olearia (strain ATCC BAA-1733 / DSM 21960 / TBF 19.5.1).